A 100-amino-acid chain; its full sequence is Urease subunit gamma (100 aa).

This sequence belongs to the urease gamma subunit family. In terms of assembly, heterotrimer of UreA (gamma), UreB (beta) and UreC (alpha) subunits. Three heterotrimers associate to form the active enzyme.

Its subcellular location is the cytoplasm. The catalysed reaction is urea + 2 H2O + H(+) = hydrogencarbonate + 2 NH4(+). It functions in the pathway nitrogen metabolism; urea degradation; CO(2) and NH(3) from urea (urease route): step 1/1. The chain is Urease subunit gamma from Escherichia coli.